The sequence spans 238 residues: Succinate dehydrogenase iron-sulfur subunit (238 aa).

The 2Fe-2S ferredoxin-type domain occupies 8 to 97 (YRYNPDVDDA…KIVIRPLPGL (90 aa)). [2Fe-2S] cluster-binding residues include Cys55, Cys60, and Cys75. In terms of domain architecture, 4Fe-4S ferredoxin-type spans 139 to 169 (QREKLDGLYECILCACCSTSCPSFWWNPDKF). 3 residues coordinate [4Fe-4S] cluster: Cys149, Cys152, and Cys155. Residue Cys159 coordinates [3Fe-4S] cluster. Trp164 contributes to the a ubiquinone binding site. Residues Cys206 and Cys212 each contribute to the [3Fe-4S] cluster site. Cys216 provides a ligand contact to [4Fe-4S] cluster.

Belongs to the succinate dehydrogenase/fumarate reductase iron-sulfur protein family. As to quaternary structure, part of an enzyme complex containing four subunits: a flavoprotein, an iron-sulfur, cytochrome b-556, and a hydrophobic anchor protein. The complex forms trimers. The cofactor is [2Fe-2S] cluster. It depends on [3Fe-4S] cluster as a cofactor. [4Fe-4S] cluster serves as cofactor.

The protein localises to the cell inner membrane. The enzyme catalyses a quinone + succinate = fumarate + a quinol. It participates in carbohydrate metabolism; tricarboxylic acid cycle; fumarate from succinate (bacterial route): step 1/1. In terms of biological role, two distinct, membrane-bound, FAD-containing enzymes are responsible for the catalysis of fumarate and succinate interconversion; the fumarate reductase is used in anaerobic growth, and the succinate dehydrogenase is used in aerobic growth. The chain is Succinate dehydrogenase iron-sulfur subunit (sdhB) from Escherichia coli (strain K12).